We begin with the raw amino-acid sequence, 239 residues long: Guanylate kinase (239 aa).

The 179-residue stretch at G19–Q197 folds into the Guanylate kinase-like domain. G26–G33 serves as a coordination point for ATP.

This sequence belongs to the guanylate kinase family.

It localises to the cytoplasm. The enzyme catalyses GMP + ATP = GDP + ADP. Functionally, essential for recycling GMP and indirectly, cGMP. This Deinococcus radiodurans (strain ATCC 13939 / DSM 20539 / JCM 16871 / CCUG 27074 / LMG 4051 / NBRC 15346 / NCIMB 9279 / VKM B-1422 / R1) protein is Guanylate kinase (gmk).